The following is a 332-amino-acid chain: Terpene synthase 1 (332 aa).

The DDxx(x)D/E motif signature appears at 81 to 86; the sequence is DDGLDA. An NDxxSxxxD/E motif motif is present at residues 221-229; sequence NDLVSYEKE.

Belongs to the terpene synthase family.

The catalysed reaction is (2E,6E)-farnesyl diphosphate = (2S,3R,6S,9S)-(-)-protoillud-7-ene + diphosphate. Functionally, terpene synthase that converts its substrate farnesyl diphosphate (FPP) into the sesquiterpene protoillud-7-ene. In Acytostelium subglobosum (Slime mold), this protein is Terpene synthase 1.